The sequence spans 140 residues: Fluoride-specific ion channel FluC 2 (140 aa).

4 helical membrane passes run 7–27, 45–65, 77–97, and 106–126; these read VPPL…LGAL, WATF…MVLV, PFAG…GLEI, and VLEA…GVVL. Glycine 85 and threonine 88 together coordinate Na(+).

Belongs to the fluoride channel Fluc/FEX (TC 1.A.43) family.

The protein resides in the cell membrane. It catalyses the reaction fluoride(in) = fluoride(out). Its activity is regulated as follows. Na(+) is not transported, but it plays an essential structural role and its presence is essential for fluoride channel function. Functionally, fluoride-specific ion channel. Important for reducing fluoride concentration in the cell, thus reducing its toxicity. The chain is Fluoride-specific ion channel FluC 2 from Nocardia farcinica (strain IFM 10152).